Here is a 156-residue protein sequence, read N- to C-terminus: ATP synthase subunit b (156 aa).

The chain crosses the membrane as a helical span at residues 3–23 (INFTLLAQALAFAGLIWIIAT).

The protein belongs to the ATPase B chain family. F-type ATPases have 2 components, F(1) - the catalytic core - and F(0) - the membrane proton channel. F(1) has five subunits: alpha(3), beta(3), gamma(1), delta(1), epsilon(1). F(0) has three main subunits: a(1), b(2) and c(10-14). The alpha and beta chains form an alternating ring which encloses part of the gamma chain. F(1) is attached to F(0) by a central stalk formed by the gamma and epsilon chains, while a peripheral stalk is formed by the delta and b chains.

The protein localises to the cell inner membrane. Its function is as follows. F(1)F(0) ATP synthase produces ATP from ADP in the presence of a proton or sodium gradient. F-type ATPases consist of two structural domains, F(1) containing the extramembraneous catalytic core and F(0) containing the membrane proton channel, linked together by a central stalk and a peripheral stalk. During catalysis, ATP synthesis in the catalytic domain of F(1) is coupled via a rotary mechanism of the central stalk subunits to proton translocation. Component of the F(0) channel, it forms part of the peripheral stalk, linking F(1) to F(0). This chain is ATP synthase subunit b, found in Stenotrophomonas maltophilia (strain R551-3).